The following is a 445-amino-acid chain: Methylthioribose-1-phosphate isomerase (445 aa).

The Proton donor role is filled by Asp-286.

The protein belongs to the eIF-2B alpha/beta/delta subunits family. MtnA subfamily.

The protein resides in the cytoplasm. The protein localises to the nucleus. It catalyses the reaction 5-(methylsulfanyl)-alpha-D-ribose 1-phosphate = 5-(methylsulfanyl)-D-ribulose 1-phosphate. It functions in the pathway amino-acid biosynthesis; L-methionine biosynthesis via salvage pathway; L-methionine from S-methyl-5-thio-alpha-D-ribose 1-phosphate: step 1/6. Its function is as follows. Catalyzes the interconversion of methylthioribose-1-phosphate (MTR-1-P) into methylthioribulose-1-phosphate (MTRu-1-P). The protein is Methylthioribose-1-phosphate isomerase (mri1) of Sclerotinia sclerotiorum (strain ATCC 18683 / 1980 / Ss-1) (White mold).